The following is a 970-amino-acid chain: Serine/threonine-protein kinase PLK4 (970 aa).

The Protein kinase domain maps to F12–M265. ATP is bound by residues L18 to V26 and K41. N6-acetyllysine is present on residues K45 and K46. Catalysis depends on D136, which acts as the Proton acceptor. A disordered region spans residues V324 to L373. The span at K327–F343 shows a compositional bias: low complexity. Polar residues predominate over residues Y344–G356. Basic and acidic residues predominate over residues V360 to H369. Phosphoserine is present on S401. The segment at I498–P540 is disordered. A compositionally biased stretch (basic and acidic residues) spans F504–S515. Polar residues predominate over residues A530 to P540. The Cryptic POLO box 1 (CPB1) domain occupies T586–K699. Position 665 is a phosphoserine (S665). The 114-residue stretch at S700 to P813 folds into the Cryptic POLO box 2 (CPB2) domain. The disordered stretch occupies residues G808 to R829. S817 is subject to Phosphoserine. The region spanning Q886–N964 is the POLO box domain.

This sequence belongs to the protein kinase superfamily. Ser/Thr protein kinase family. CDC5/Polo subfamily. Homodimer. Interacts with CEP152 (via N-terminus). Interacts with CEP78; this interaction may be important for proper PLK4 localization to the centriole and PLK4-induced overduplication of centrioles. Interacts with CEP131. Interacts simultaneously with TENT5C and CEP192. Interacts with TENT5C; this interaction leads to the TENT5C recruitment in the centrosome. Interacts with CEP85; this interaction may be important in cell migration and centriole assembly. Post-translationally, ubiquitinated; leading to its degradation by the proteasome. Deubiquitinated by USP54; leading to PLK4 stabilization. Tyrosine-phosphorylated by TEC. In terms of processing, acetylation by KAT2A and KAT2B impairs kinase activity by shifting the kinase to an inactive conformation.

It is found in the cytoplasm. It localises to the cytoskeleton. The protein localises to the microtubule organizing center. The protein resides in the centrosome. Its subcellular location is the centriole. It is found in the nucleus. It localises to the nucleolus. The protein localises to the cleavage furrow. It carries out the reaction L-seryl-[protein] + ATP = O-phospho-L-seryl-[protein] + ADP + H(+). The catalysed reaction is L-threonyl-[protein] + ATP = O-phospho-L-threonyl-[protein] + ADP + H(+). In terms of biological role, serine/threonine-protein kinase that plays a central role in centriole duplication. Able to trigger procentriole formation on the surface of the parental centriole cylinder, leading to the recruitment of centriole biogenesis proteins such as SASS6, CPAP, CCP110, CEP135 and gamma-tubulin. When overexpressed, it is able to induce centrosome amplification through the simultaneous generation of multiple procentrioles adjoining each parental centriole during S phase. Phosphorylates 'Ser-151' of FBXW5 during the G1/S transition, leading to inhibit FBXW5 ability to ubiquitinate SASS6. Its central role in centriole replication suggests a possible role in tumorigenesis, centrosome aberrations being frequently observed in tumors. Also involved in deuterosome-mediated centriole amplification in multiciliated that can generate more than 100 centrioles. Also involved in trophoblast differentiation by phosphorylating HAND1, leading to disrupt the interaction between HAND1 and MDFIC and activate HAND1. Phosphorylates CDC25C and CHEK2. Required for the recruitment of STIL to the centriole and for STIL-mediated centriole amplification. Phosphorylates CEP131 and PCM1 which is essential for proper organization and integrity of centriolar satellites. This Pongo abelii (Sumatran orangutan) protein is Serine/threonine-protein kinase PLK4.